The primary structure comprises 350 residues: Protein RecA (350 aa).

67 to 74 (GPESSGKT) serves as a coordination point for ATP.

Belongs to the RecA family.

Its subcellular location is the cytoplasm. Its function is as follows. Can catalyze the hydrolysis of ATP in the presence of single-stranded DNA, the ATP-dependent uptake of single-stranded DNA by duplex DNA, and the ATP-dependent hybridization of homologous single-stranded DNAs. It interacts with LexA causing its activation and leading to its autocatalytic cleavage. In Chlamydia caviae (strain ATCC VR-813 / DSM 19441 / 03DC25 / GPIC) (Chlamydophila caviae), this protein is Protein RecA.